A 361-amino-acid polypeptide reads, in one-letter code: Probable dual-specificity RNA methyltransferase RlmN (361 aa).

Glu91 (proton acceptor) is an active-site residue. A Radical SAM core domain is found at 97–329 (QHYGLSVCVT…KKKGGNCVVR (233 aa)). Cys104 and Cys340 are oxidised to a cystine. The [4Fe-4S] cluster site is built by Cys111, Cys115, and Cys118. S-adenosyl-L-methionine-binding positions include 163-164 (GE), Ser195, 218-220 (SLH), and Asn296. The active-site S-methylcysteine intermediate is the Cys340.

This sequence belongs to the radical SAM superfamily. RlmN family. Requires [4Fe-4S] cluster as cofactor.

It localises to the cytoplasm. It catalyses the reaction adenosine(2503) in 23S rRNA + 2 reduced [2Fe-2S]-[ferredoxin] + 2 S-adenosyl-L-methionine = 2-methyladenosine(2503) in 23S rRNA + 5'-deoxyadenosine + L-methionine + 2 oxidized [2Fe-2S]-[ferredoxin] + S-adenosyl-L-homocysteine. The catalysed reaction is adenosine(37) in tRNA + 2 reduced [2Fe-2S]-[ferredoxin] + 2 S-adenosyl-L-methionine = 2-methyladenosine(37) in tRNA + 5'-deoxyadenosine + L-methionine + 2 oxidized [2Fe-2S]-[ferredoxin] + S-adenosyl-L-homocysteine. Specifically methylates position 2 of adenine 2503 in 23S rRNA and position 2 of adenine 37 in tRNAs. The chain is Probable dual-specificity RNA methyltransferase RlmN from Streptococcus pneumoniae (strain P1031).